A 754-amino-acid chain; its full sequence is Pentatricopeptide repeat-containing protein At3g53700, chloroplastic (754 aa).

A chloroplast-targeting transit peptide spans 1-72 (MAFSSCLKFY…DSAALRLFNL (72 aa)). PPR repeat units lie at residues 82–116 (EPAL…RCEM), 117–152 (GTST…GLKP), 153–187 (DTHF…GIKP), 188–222 (DVST…GLVP), 223–257 (DEKT…GCSW), 258–288 (SNVS…MSNQ), 294–328 (DQYT…GYDP), 329–363 (DVYT…DCSP), 364–398 (NTVT…GILP), 399–433 (DVCT…GCEP), 434–468 (DEFT…GCAR), 469–503 (SVIT…GVSR), 504–538 (NSVT…GQKP), 539–573 (DKYT…GCEP), 574–608 (DIVT…GINL), 609–643 (TPHA…NEAP), and 645–680 (DAVS…GFVP).

The protein belongs to the PPR family. P subfamily.

It localises to the plastid. It is found in the chloroplast. May be involved in female gametophyte development. The sequence is that of Pentatricopeptide repeat-containing protein At3g53700, chloroplastic (MEE40) from Arabidopsis thaliana (Mouse-ear cress).